The primary structure comprises 161 residues: Allophycocyanin beta chain (161 aa).

The residue at position 71 (asparagine 71) is an N4-methylasparagine. (2R,3E)-phycocyanobilin is bound at residue cysteine 81.

The protein belongs to the phycobiliprotein family. In terms of assembly, heterodimer of an alpha and a beta chain. Contains one covalently linked phycocyanobilin chromophore.

The protein localises to the plastid. The protein resides in the chloroplast thylakoid membrane. In terms of biological role, light-harvesting photosynthetic bile pigment-protein from the phycobiliprotein complex. Allophycocyanin has a maximum absorption at approximately 650 nanometers. This is Allophycocyanin beta chain (apcB) from Cyanidium caldarium (Red alga).